The chain runs to 984 residues: UPF0592 protein YDL073W (984 aa).

The segment at lysine 675 to serine 712 is disordered. Positions glutamine 687 to aspartate 698 are enriched in acidic residues.

This sequence belongs to the UPF0592 family.

This Saccharomyces cerevisiae (strain ATCC 204508 / S288c) (Baker's yeast) protein is UPF0592 protein YDL073W.